Consider the following 298-residue polypeptide: Probable 2-(5''-triphosphoribosyl)-3'-dephosphocoenzyme-A synthase 2 (298 aa).

The protein belongs to the CitG/MdcB family.

The enzyme catalyses 3'-dephospho-CoA + ATP = 2'-(5''-triphospho-alpha-D-ribosyl)-3'-dephospho-CoA + adenine. The polypeptide is Probable 2-(5''-triphosphoribosyl)-3'-dephosphocoenzyme-A synthase 2 (Salmonella paratyphi A (strain ATCC 9150 / SARB42)).